Reading from the N-terminus, the 306-residue chain is Natural cytotoxicity triggering receptor 1 (306 aa).

Positions 1–21 are cleaved as a signal peptide; it reads MSSTLRALLCLGLCLSQRISA. Topologically, residues 22-257 are extracellular; that stretch reads PKQTLPKPII…WDHTAQNLLR (236 aa). 2 consecutive Ig-like domains span residues 42 to 100 and 137 to 192; these read EKQA…SCIY and GEKV…RCFG. Intrachain disulfides connect Cys-49–Cys-98 and Cys-144–Cys-190. Asn-216 is a glycosylation site (N-linked (GlcNAc...) asparagine). The helical transmembrane segment at 258-278 threads the bilayer; sequence MGLAFLVLVALVCLLVEDWLS. Over 279–306 the chain is Cytoplasmic; the sequence is RKRTREQASRASTWEGRRRLNKHKDSEE.

This sequence belongs to the natural cytotoxicity receptor (NCR) family. Interacts with CD3Z and FCER1G. Expressed in NK cells.

It localises to the cell membrane. Cytotoxicity-activating receptor that may contribute to the increased efficiency of activated natural killer (NK) cells to mediate tumor cell lysis. The protein is Natural cytotoxicity triggering receptor 1 (NCR1) of Macaca fascicularis (Crab-eating macaque).